The following is a 257-amino-acid chain: 5-oxoprolinase subunit A (257 aa).

This sequence belongs to the LamB/PxpA family. As to quaternary structure, forms a complex composed of PxpA, PxpB and PxpC.

It catalyses the reaction 5-oxo-L-proline + ATP + 2 H2O = L-glutamate + ADP + phosphate + H(+). Its function is as follows. Catalyzes the cleavage of 5-oxoproline to form L-glutamate coupled to the hydrolysis of ATP to ADP and inorganic phosphate. This is 5-oxoprolinase subunit A from Pectobacterium atrosepticum (strain SCRI 1043 / ATCC BAA-672) (Erwinia carotovora subsp. atroseptica).